Here is a 478-residue protein sequence, read N- to C-terminus: D-ribulose kinase (478 aa).

The N-terminal 38 residues, 1–38 (MLILRQFQISSFELFQSPKQTGFYSSSRSVPLPRTRFY), are a transit peptide targeting the chloroplast. Residues Asp-60, 64-67 (SGGR), and Asp-278 each bind substrate. ATP is bound by residues Ser-300, Gly-338, and 433–437 (GGAKN).

Belongs to the FGGY kinase family. Requires a divalent metal cation as cofactor.

It localises to the plastid. It is found in the chloroplast. The catalysed reaction is D-ribulose + ATP = D-ribulose 5-phosphate + ADP + H(+). In terms of biological role, exhibits ATP hydrolysis without substrate. Can phosphorylate D-ribulose with low efficiency. The polypeptide is D-ribulose kinase (Arabidopsis thaliana (Mouse-ear cress)).